A 921-amino-acid polypeptide reads, in one-letter code: Isoleucine--tRNA ligase (921 aa).

Residues 57-67 (PYANGDIHMGH) carry the 'HIGH' region motif. L-isoleucyl-5'-AMP is bound at residue Glu-552. A 'KMSKS' region motif is present at residues 593–597 (KMSKS). Position 596 (Lys-596) interacts with ATP. Positions 888, 891, 908, and 911 each coordinate Zn(2+).

The protein belongs to the class-I aminoacyl-tRNA synthetase family. IleS type 1 subfamily. In terms of assembly, monomer. The cofactor is Zn(2+).

It is found in the cytoplasm. It carries out the reaction tRNA(Ile) + L-isoleucine + ATP = L-isoleucyl-tRNA(Ile) + AMP + diphosphate. Its function is as follows. Catalyzes the attachment of isoleucine to tRNA(Ile). As IleRS can inadvertently accommodate and process structurally similar amino acids such as valine, to avoid such errors it has two additional distinct tRNA(Ile)-dependent editing activities. One activity is designated as 'pretransfer' editing and involves the hydrolysis of activated Val-AMP. The other activity is designated 'posttransfer' editing and involves deacylation of mischarged Val-tRNA(Ile). The chain is Isoleucine--tRNA ligase from Bacillus cereus (strain AH187).